Here is a 444-residue protein sequence, read N- to C-terminus: Gustatory receptor 5a for trehalose (444 aa).

Residues 1 to 56 (MRQLKGRNRCNRAVRHLKIQGKMWLKNLKSGLEQIRESQVRGTRKNFLHDGSFHEA) are Cytoplasmic-facing. A helical transmembrane segment spans residues 57-77 (VAPVLAVAQCFCLMPVCGISA). Over 78-178 (PTYRGLSFNR…RARPARRLKL (101 aa)) the chain is Extracellular. Residues 179–199 (VAFVLLVVSLMEHLLSIISVV) form a helical membrane-spanning segment. The Cytoplasmic segment spans residues 200-214 (YYDFCPRRSDPVESY). Residues 215-235 (LLGASAQLFEVFPYSNWLAWL) traverse the membrane as a helical segment. The Extracellular segment spans residues 236 to 240 (GKIQN). A helical membrane pass occupies residues 241–261 (VLLTFGWSYMDIFLMMLGMGL). The Cytoplasmic segment spans residues 262–305 (SEMLARLNRSLEQQVRQPMPEAYWTWSRTLYRSIVELIREVDDA). Residues 306 to 326 (VSGIMLISFGSNLYFICLQLL) traverse the membrane as a helical segment. At 327-338 (KSINTMPSSAHA) the chain is on the extracellular side. A helical transmembrane segment spans residues 339 to 359 (VYFYFSLLFLLSRSTAVLLFV). The Cytoplasmic portion of the chain corresponds to 360–410 (SAINDQAREPLRLLRLVPLKGYHPEVFRFAAELASDQVALTGLKFFNVTRK). Residues 411–431 (LFLAMAGTVATYELVLIQFHE) traverse the membrane as a helical segment. The Extracellular segment spans residues 432–444 (DKKTWDCSPFNLD).

It belongs to the insect chemoreceptor superfamily. Gustatory receptor (GR) family. Gr5a subfamily. In terms of tissue distribution, expressed in labellar chemosensory neurons.

The protein localises to the cell membrane. Functionally, gustatory receptor required for response to the sugar trehalose in taste neurons. Gr5a neurons selectively respond to sugars, in contrast to Gr66a cells which respond to bitter compounds. Flies are attracted to sugars and avoid bitter substances, suggesting that Gr5a neuron activity is sufficient to mediate acceptance behavior. Sugar signal transduction occurs through coupling with G-proteins such as Galpha49B and G-salpha60A. This is Gustatory receptor 5a for trehalose (Gr5a) from Drosophila melanogaster (Fruit fly).